The chain runs to 334 residues: Heat-inducible transcription repressor HrcA (334 aa).

The protein belongs to the HrcA family.

Its function is as follows. Negative regulator of class I heat shock genes (grpE-dnaK-dnaJ and groELS operons). Prevents heat-shock induction of these operons. In Bordetella bronchiseptica (strain ATCC BAA-588 / NCTC 13252 / RB50) (Alcaligenes bronchisepticus), this protein is Heat-inducible transcription repressor HrcA.